The following is a 220-amino-acid chain: uncharacterized protein (220 aa).

The stretch at 165-202 forms a coiled coil; the sequence is DKYEDLISDYNKIMEKYREVIKSEIEKYKALSKRKNDI.

This is an uncharacterized protein from Pasteurella multocida (strain Pm70).